Consider the following 239-residue polypeptide: Mediator of RNA polymerase II transcription subunit 4 (239 aa).

The segment at 168 to 221 (QLFSEQPPKTNEPTETETEIDANKAVEEKTKMNYPASPTFTTQEENKEVESPAN) is disordered. Residues 188 to 198 (DANKAVEEKTK) show a composition bias toward basic and acidic residues. Residues Ser-204 and Ser-218 each carry the phosphoserine modification.

The protein belongs to the Mediator complex subunit 4 family. Component of the Mediator complex.

The protein resides in the nucleus. Its function is as follows. Component of the Mediator complex, a coactivator involved in the regulated transcription of nearly all RNA polymerase II-dependent genes. Mediator functions as a bridge to convey information from gene-specific regulatory proteins to the basal RNA polymerase II transcription machinery. Mediator is recruited to promoters by direct interactions with regulatory proteins and serves as a scaffold for the assembly of a functional preinitiation complex with RNA polymerase II and the general transcription factors. The protein is Mediator of RNA polymerase II transcription subunit 4 (med4) of Schizosaccharomyces pombe (strain 972 / ATCC 24843) (Fission yeast).